The primary structure comprises 365 residues: Annexin B22 (365 aa).

Annexin repeat units lie at residues 34-105 (FSAS…QLIV), 106-185 (DTPY…SLVQ), 211-283 (ELAE…AVLR), and 287-358 (DRPS…VLMG). The Ca(2+) site is built by methionine 47, glycine 49, glycine 51, threonine 52, glutamate 54, aspartate 91, methionine 119, glycine 121, glycine 123, aspartate 126, lysine 169, glutamate 171, threonine 172, glutamate 177, aspartate 273, methionine 300, glycine 302, leucine 303, glycine 304, and aspartate 344.

The protein belongs to the annexin family. In terms of assembly, homodimer.

The protein resides in the tegument. Its subcellular location is the secreted. The protein localises to the extracellular exosome. It is found in the host cell. Its function is as follows. Involved in reproduction of the worm. Involved in host-parasite interaction. Delivered into the host cell by means of parasite exosomes. Binds to acidic phospholipid membranes in a calcium-dependent manner in vitro. Causes aggregation of liposomes in the presence of calcium, but not in its absence. Likely to promote membrane fusion. May provide structural integrity within the tegument. This is Annexin B22 from Schistosoma mansoni (Blood fluke).